The following is a 615-amino-acid chain: Aspartokinase (615 aa).

Disordered stretches follow at residues 84-105 (ALQPAMSSSGDGRSGSMSGTAT) and 127-171 (SSVS…SISQ). 2 stretches are compositionally biased toward low complexity: residues 90 to 102 (SSSGDGRSGSMSG) and 127 to 164 (SSVSSLSQLESQLGRSGSPSPFQSSSSRSPPRSPATPS). The 71-residue stretch at 467 to 537 (IHSNRKTLSH…EVTVSKDMAI (71 aa)) folds into the ACT domain.

Belongs to the aspartokinase family.

The enzyme catalyses L-aspartate + ATP = 4-phospho-L-aspartate + ADP. It participates in amino-acid biosynthesis; L-methionine biosynthesis via de novo pathway; L-homoserine from L-aspartate: step 1/3. Its pathway is amino-acid biosynthesis; L-threonine biosynthesis; L-threonine from L-aspartate: step 1/5. In terms of biological role, phosphorylates aspartate, the first step in the biosynthesis of amino acids that derive from aspartate (the aspartate family of amino acids), including methioinine and threonine, the latter of which is a precursor to isoleucine. This chain is Aspartokinase, found in Cryptococcus neoformans var. grubii serotype A (strain H99 / ATCC 208821 / CBS 10515 / FGSC 9487) (Filobasidiella neoformans var. grubii).